Consider the following 246-residue polypeptide: Large ribosomal subunit protein uL30-like 1 (246 aa).

Ser-54 is subject to Phosphoserine.

Belongs to the universal ribosomal protein uL30 family.

This is Large ribosomal subunit protein uL30-like 1 (Rpl7l1) from Mus musculus (Mouse).